Here is a 4116-residue protein sequence, read N- to C-terminus: Dynein axonemal heavy chain 3 (4116 aa).

Disordered regions lie at residues 1–68 (MGAT…ANEE) and 137–172 (VPRD…KEDS). Positions 1–1390 (MGATGRLELT…QVQIITTEAL (1390 aa)) are stem. Residues 145 to 156 (GLPSSGNRSSSE) are compositionally biased toward polar residues. The stretch at 785-852 (DLIKRCSEFE…NKEEELLEKE (68 aa)) forms a coiled coil. AAA stretches follow at residues 1391–1612 (YGYE…VLTA), 1672–1903 (KVLN…LHCK), 2036–2284 (KVPA…VIQG), and 2395–2646 (EFNN…LRRH). ATP-binding positions include 1429–1436 (GPAGTGKT), 1710–1717 (GDPMGGKT), 2074–2081 (GPTGTGKS), and 2434–2441 (GIGGSGRQ). The segment at 2661–2960 (FKTLLNSKRQ…KDLEENIEIC (300 aa)) is stalk. 2 AAA regions span residues 3045 to 3275 (LGDP…EISE) and 3488 to 3712 (VREF…QIQM).

It belongs to the dynein heavy chain family. Consists of at least two heavy chains and a number of intermediate and light chains. As to expression, expressed primarily in trachea and testis, 2 tissues containing axonemal structures. Also expressed in lung.

It localises to the cytoplasm. The protein localises to the cytoskeleton. Its subcellular location is the cilium axoneme. Force generating protein of respiratory cilia. Produces force towards the minus ends of microtubules. Dynein has ATPase activity; the force-producing power stroke is thought to occur on release of ADP. Involved in sperm motility; implicated in sperm flagellar assembly. This Homo sapiens (Human) protein is Dynein axonemal heavy chain 3 (DNAH3).